The following is a 194-amino-acid chain: dCTP deaminase, dUMP-forming (194 aa).

DCTP is bound by residues 105–110 (RSSMGR), Asp123, 131–133 (TLE), Gln152, Tyr166, Lys174, and Gln178. The active-site Proton donor/acceptor is Glu133.

Belongs to the dCTP deaminase family. Homotrimer.

The enzyme catalyses dCTP + 2 H2O = dUMP + NH4(+) + diphosphate. Its pathway is pyrimidine metabolism; dUMP biosynthesis; dUMP from dCTP: step 1/1. Functionally, bifunctional enzyme that catalyzes both the deamination of dCTP to dUTP and the hydrolysis of dUTP to dUMP without releasing the toxic dUTP intermediate. The chain is dCTP deaminase, dUMP-forming from Methanobrevibacter smithii (strain ATCC 35061 / DSM 861 / OCM 144 / PS).